Here is a 292-residue protein sequence, read N- to C-terminus: Acetyl-coenzyme A carboxylase carboxyl transferase subunit beta (292 aa).

Positions 35-292 (VFSQCEQCNS…LKLHAKKVTS (258 aa)) constitute a CoA carboxyltransferase N-terminal domain. Residues Cys-39, Cys-42, Cys-58, and Cys-61 each coordinate Zn(2+). The C4-type zinc finger occupies 39 to 61 (CEQCNSAIYNKDLEHNYEVCPYC).

Belongs to the AccD/PCCB family. As to quaternary structure, acetyl-CoA carboxylase is a heterohexamer composed of biotin carboxyl carrier protein (AccB), biotin carboxylase (AccC) and two subunits each of ACCase subunit alpha (AccA) and ACCase subunit beta (AccD). Zn(2+) serves as cofactor.

It is found in the cytoplasm. The catalysed reaction is N(6)-carboxybiotinyl-L-lysyl-[protein] + acetyl-CoA = N(6)-biotinyl-L-lysyl-[protein] + malonyl-CoA. Its pathway is lipid metabolism; malonyl-CoA biosynthesis; malonyl-CoA from acetyl-CoA: step 1/1. Functionally, component of the acetyl coenzyme A carboxylase (ACC) complex. Biotin carboxylase (BC) catalyzes the carboxylation of biotin on its carrier protein (BCCP) and then the CO(2) group is transferred by the transcarboxylase to acetyl-CoA to form malonyl-CoA. This is Acetyl-coenzyme A carboxylase carboxyl transferase subunit beta from Acholeplasma laidlawii (strain PG-8A).